The primary structure comprises 930 residues: G patch domain-containing protein TGH (930 aa).

Residue lysine 25 forms a Glycyl lysine isopeptide (Lys-Gly) (interchain with G-Cter in ubiquitin) linkage. The segment at 76 to 152 (GWAPQSFTSS…PSAIPGPVPD (77 aa)) is disordered. The G-patch domain maps to 159–199 (SESIGVKLLLKMGWRRGHSIKEVRASSDARREARKAFLAFY). Residues 405-447 (LIEGFATFVSRCGKLYEDLSREKNQSNQLFDFLREGNGHDYYA) form an SURP motif repeat. 3 disordered regions span residues 478–508 (AETRGSLLGEKPLQRSLKETDTSASSGGSFQ), 687–751 (RQVS…NEAA), and 773–930 (FEVP…RRRD). A compositionally biased stretch (basic and acidic residues) spans 489-498 (PLQRSLKETD). Residues 499–508 (TSASSGGSFQ) show a composition bias toward polar residues. Acidic residues predominate over residues 701–711 (IEEPEVEVEVE). Positions 779–808 (EEIKSRSKPEDSSDKRLDRPGLKEKVEEKT) are enriched in basic and acidic residues. Basic residues predominate over residues 848-857 (RRKRYNKKDR). The span at 858 to 877 (HRNDSESDSSSDYHSRDKQG) shows a compositional bias: basic and acidic residues. Residues 892–908 (RSSHKKHSKHRRTKKSS) show a composition bias toward basic residues. Residues 913 to 923 (SSDEEQKESRR) show a composition bias toward basic and acidic residues.

Expressed in vasculature of cotyledons and leaves, young meristematic tissues, trichomes and pistils.

It is found in the nucleus speckle. Its subcellular location is the nucleus. The protein localises to the nucleoplasm. In terms of biological role, functions as a component of microRNA (miRNA) and small interfering RNA (siRNA) biogenesis. May assist DCL1 and DCL4 to efficiently process and/or recruit the precursors of miRNAs and siRNAs. In the miRNA biogenesis pathway, associates with the DCL1 complex that processes primary miRNAs (pri-miRNAs) into miRNAs. Binds pri-miRNAs and precursor miRNAs (pre-miRNAs). Is required for the interaction between pri-miRNAs and DRB1. Required for general proper plant growth and, in particular, initiation of vascular development. Interacts genetically with AMP1, a glutamate carboxypeptidase involved in the regulation of meristem function. The protein is G patch domain-containing protein TGH of Arabidopsis thaliana (Mouse-ear cress).